The chain runs to 439 residues: Taxadien-5-alpha-ol O-acetyltransferase (439 aa).

Active-site proton acceptor residues include histidine 164 and aspartate 373.

This sequence belongs to the plant acyltransferase family.

The enzyme catalyses taxa-4(20),11-dien-5alpha-ol + acetyl-CoA = taxa-4(20),11-dien-5alpha-yl acetate + CoA. It participates in alkaloid biosynthesis; taxol biosynthesis; 10-deacetyl-2-debenzoylbaccatin III from taxa-4(20),11-dien-5alpha-ol: step 1/3. The chain is Taxadien-5-alpha-ol O-acetyltransferase from Taxus chinensis (Chinese yew).